The sequence spans 100 residues: MARKSLIQREKGRLKLENKYHFIRRSSKNEISKVPSLSDKWEIYGKLESPPRNSAPTRLRRRCFYTGRPRANYRDFGLCGHILREMVNACLLPGATRSSW.

The protein belongs to the universal ribosomal protein uS14 family. Part of the 30S ribosomal subunit.

The protein localises to the plastid. Its function is as follows. Binds 16S rRNA, required for the assembly of 30S particles. This is Small ribosomal subunit protein uS14c from Epifagus virginiana (Beechdrops).